The chain runs to 70 residues: Cold shock-like protein CspJ (70 aa).

Positions glycine 7–valine 67 constitute a CSD domain.

The protein resides in the cytoplasm. The chain is Cold shock-like protein CspJ (cspJ) from Salmonella typhi.